Consider the following 165-residue polypeptide: Acireductone dioxygenase (165 aa).

His-90, His-92, Glu-96, and His-134 together coordinate Fe(2+). Ni(2+) is bound by residues His-90, His-92, Glu-96, and His-134.

Belongs to the acireductone dioxygenase (ARD) family. As to quaternary structure, monomer. Requires Fe(2+) as cofactor. Ni(2+) is required as a cofactor.

The catalysed reaction is 1,2-dihydroxy-5-(methylsulfanyl)pent-1-en-3-one + O2 = 3-(methylsulfanyl)propanoate + CO + formate + 2 H(+). It catalyses the reaction 1,2-dihydroxy-5-(methylsulfanyl)pent-1-en-3-one + O2 = 4-methylsulfanyl-2-oxobutanoate + formate + 2 H(+). It participates in amino-acid biosynthesis; L-methionine biosynthesis via salvage pathway; L-methionine from S-methyl-5-thio-alpha-D-ribose 1-phosphate: step 5/6. Its function is as follows. Catalyzes 2 different reactions between oxygen and the acireductone 1,2-dihydroxy-3-keto-5-methylthiopentene (DHK-MTPene) depending upon the metal bound in the active site. Fe-containing acireductone dioxygenase (Fe-ARD) produces formate and 2-keto-4-methylthiobutyrate (KMTB), the alpha-ketoacid precursor of methionine in the methionine recycle pathway. Ni-containing acireductone dioxygenase (Ni-ARD) produces methylthiopropionate, carbon monoxide and formate, and does not lie on the methionine recycle pathway. The polypeptide is Acireductone dioxygenase (Rhodopseudomonas palustris (strain ATCC BAA-98 / CGA009)).